Reading from the N-terminus, the 500-residue chain is MSIIDTRTPEPKRFISGATGDWEVVIGMEVHAQVTSESKLFSGASTAFGAEPNSNVSLVDAAMPGMLPVINLECVRQAVRTGIGLNAQINLKSVFDRKNYFYPDLPQGYQISQFKQPIVGEGKIMISVGPDNKGQFEDVEIGIERLHLEQDAGKSMHDQHPTMSYVDLNRSGVALMEIVSKPDLRSSDEARAYLTKLRTIVRYLGTCDGNMDEGSMRADVNVSVHRPGGEFGTRCEIKNVNSIRFVGQAIEYEARRQIAILEDGGVIDQETRLFDPVKGETRSMRSKEEAHDYRYFPDPDLLPLEFNQAFVDALAAKLPELPDVKKQRLVETLGISVYDASILVTEKAIADYYEAVAEGRDGKAAANWVINDLLGALNKAGKDIEESPISPAQLGAIIDLIKEGTISGKIAKDLFEIVWNEGGDPKKLVEERGMKQVTDTGAIEKAVDDVIAANPDKVEQAKAKPTLAGWFVGQVMKAMGGKANPQAVNELVKSKLGIEE.

Belongs to the GatB/GatE family. GatB subfamily. Heterotrimer of A, B and C subunits.

It carries out the reaction L-glutamyl-tRNA(Gln) + L-glutamine + ATP + H2O = L-glutaminyl-tRNA(Gln) + L-glutamate + ADP + phosphate + H(+). It catalyses the reaction L-aspartyl-tRNA(Asn) + L-glutamine + ATP + H2O = L-asparaginyl-tRNA(Asn) + L-glutamate + ADP + phosphate + 2 H(+). In terms of biological role, allows the formation of correctly charged Asn-tRNA(Asn) or Gln-tRNA(Gln) through the transamidation of misacylated Asp-tRNA(Asn) or Glu-tRNA(Gln) in organisms which lack either or both of asparaginyl-tRNA or glutaminyl-tRNA synthetases. The reaction takes place in the presence of glutamine and ATP through an activated phospho-Asp-tRNA(Asn) or phospho-Glu-tRNA(Gln). This Brucella ovis (strain ATCC 25840 / 63/290 / NCTC 10512) protein is Aspartyl/glutamyl-tRNA(Asn/Gln) amidotransferase subunit B.